A 427-amino-acid polypeptide reads, in one-letter code: Polyprenol-phosphate-mannose-dependent alpha-(1-2)-phosphatidylinositol mannoside mannosyltransferase (427 aa).

A run of 10 helical transmembrane segments spans residues leucine 18–phenylalanine 38, alanine 101–leucine 121, tryptophan 143–phenylalanine 163, leucine 191–leucine 211, alanine 218–tryptophan 238, glutamate 279–methionine 299, proline 308–serine 328, tryptophan 331–tryptophan 346, valine 351–leucine 371, and leucine 386–valine 406.

This sequence belongs to the glycosyltransferase 87 family.

The protein resides in the cell membrane. It participates in phospholipid metabolism; phosphatidylinositol metabolism. Functionally, responsible for the addition of alpha-(1-2) mannose branches to the linear mannan core on the biosynthetic pathway to mature lipoarabinomannan (LAM). The protein is Polyprenol-phosphate-mannose-dependent alpha-(1-2)-phosphatidylinositol mannoside mannosyltransferase of Mycobacterium tuberculosis (strain ATCC 25618 / H37Rv).